Here is a 297-residue protein sequence, read N- to C-terminus: Adrenocorticotropic hormone receptor (297 aa).

The Extracellular segment spans residues 1–23; sequence MKHIIHASGNVNGTARNNSDCPH. Residues Asn-12 and Asn-17 are each glycosylated (N-linked (GlcNAc...) asparagine). 2 disulfides stabilise this stretch: Cys-21/Cys-253 and Cys-245/Cys-251. Residues 24-49 traverse the membrane as a helical segment; sequence VALPEEIFFIISITGVLENLIIILAV. Residues 50–58 are Cytoplasmic-facing; that stretch reads IKNKNLQFP. Residues 59–79 traverse the membrane as a helical segment; the sequence is MYFFICSLAISDMLGSLYKIL. Residues 80 to 104 lie on the Extracellular side of the membrane; it reads ESILIMFRNMGYFKPHGSFETTTDD. Residues 105 to 126 form a helical membrane-spanning segment; sequence IIDTMFILSLLGSIFSLLAIAV. The Cytoplasmic portion of the chain corresponds to 127–147; it reads DRYITIFHALQYHSIVTMHRT. A helical transmembrane segment spans residues 148-168; the sequence is IAVLSIIWTFCIGSGITMVLF. Over 169–180 the chain is Extracellular; the sequence is SHHVPTVLTFTS. A helical transmembrane segment spans residues 181 to 199; sequence LFPLMLVFILCLYVHMFLM. Topologically, residues 200 to 217 are cytoplasmic; the sequence is ARSHARNISTLPRGNMRG. The chain crosses the membrane as a helical span at residues 218–244; that stretch reads AITLTILLGVFIFCWAPFILHILLVTF. Topologically, residues 245–256 are extracellular; that stretch reads CPNNPYCTCYIS. Residues 257 to 278 form a helical membrane-spanning segment; that stretch reads LFHVNGMLIMCNAVIDPFIYAF. Residues 279 to 297 lie on the Cytoplasmic side of the membrane; sequence RSPELRSAFRRMISYSKCL. The S-palmitoyl cysteine moiety is linked to residue Cys-296.

This sequence belongs to the G-protein coupled receptor 1 family. As to quaternary structure, homodimer. Interacts with corticotropin (ACTH). Interacts with MRAP; this interaction targets MC2R to the plasma membrane. Interacts with MRAP2; competing with MRAP for binding to MC2R and impairing the binding of corticotropin (ACTH). Post-translationally, ubiquitinated by MGRN1 that may be involved in post-endocytic trafficking and/or degradation of internalized receptor.

The protein resides in the cell membrane. Hormone receptor primarily expressed in adrenal cortex that plays a key role in regulating adrenocortical function. Upon corticotropin (ACTH) binding, facilitates the release of adrenal glucocorticoids, including cortisol and corticosterone. In addition, MC2R is required for fetal and neonatal adrenal gland development. Mechanistically, activates adenylate cyclase (cAMP), the MAPK cascade as well as the cAMP-dependent protein kinase A pathway leading to steroidogenic factor 1/NR5A1-mediated transcriptional activation. The protein is Adrenocorticotropic hormone receptor (MC2R) of Cavia porcellus (Guinea pig).